The following is a 400-amino-acid chain: Dehydrogenase efuE (400 aa).

NAD(+) is bound by residues 222–223 (AI), 303–305 (TAR), and D329. R305 is an active-site residue. The active site involves E334. H352 serves as the catalytic Proton donor. 352–355 (HLGG) provides a ligand contact to NAD(+).

The protein belongs to the D-isomer specific 2-hydroxyacid dehydrogenase family.

It functions in the pathway secondary metabolite biosynthesis; terpenoid biosynthesis. In terms of biological role, dehydrogenase; part of the gene cluster that mediates the biosynthesis of enfumafungin, a glycosylated fernene-type triterpenoid with potent antifungal activity, mediated by its interaction with beta-1,3-glucan synthase and the fungal cell wall. The pathway begins with the terpene cyclase-glycosyl transferase fusion protein that most likely uses 2,3-oxidosqualene as substrate and catalyzes glycosylation immediately after cyclization. The fernene glycoside then could be processed by the desaturase efuI which catalyzes isomerization of a double bond established by efuA to form the core structure. The latter would then undergo a series of hydroxylations in unknown order at C-2, C-19, C-23 and C-25, which would be catalyzed by two of the three cytochrome P450 monooxygenases efuB, efuG or efuH. The hydroxy-group at C-25 becomes oxidized by the dehydrogenase efuE to enable a spontaneous, non-enzymatic hemiacetal formation with C-23. After hydroxylation at C-2, acetylation by the acetyltransferase efuC takes place. The final steps in enfumafungin biosynthesis require expansion of the 5-membered ring by lactonization via a Baeyer-Villiger reaction mediated by one of the BGC's cytochrome P450 monooxygenases (efuB, efuG or efuH) followed by ring cleavage. This type of reaction would establish a double bond between C-20 and C-21 which could be reduced by the reductase efuL to form the final product. This is Dehydrogenase efuE from Hormonema carpetanum.